The chain runs to 621 residues: Archaeal Lon protease (621 aa).

Topologically, residues 1 to 117 are cytoplasmic; that stretch reads MNEEVREILG…YKEEAMKKAQ (117 aa). 54–61 is an ATP binding site; that stretch reads GSPGTGKS. The chain crosses the membrane as a helical span at residues 118 to 136; it reads ARNFLIFTLVFLVIGYTVL. Over 137–141 the chain is Extracellular; sequence TNPGN. Residues 142 to 160 form a helical membrane-spanning segment; the sequence is LIWGIIAAVLILMMSRYFI. The Cytoplasmic segment spans residues 161–621; the sequence is PREDRNVPKL…KFKELELAAV (461 aa). Residues 423 to 602 form the Lon proteolytic domain; the sequence is GYEVGRVNGL…NEVLEHVLED (180 aa). Catalysis depends on residues S509 and K552.

This sequence belongs to the peptidase S16 family. Archaeal LonB subfamily. As to quaternary structure, homohexamer. Organized in a ring with a central cavity.

It is found in the cell membrane. Functionally, ATP-dependent serine protease that mediates the selective degradation of mutant and abnormal proteins as well as certain short-lived regulatory proteins. Degrades polypeptides processively. This chain is Archaeal Lon protease, found in Archaeoglobus fulgidus (strain ATCC 49558 / DSM 4304 / JCM 9628 / NBRC 100126 / VC-16).